Here is a 219-residue protein sequence, read N- to C-terminus: Histone H1.11R (219 aa).

2 stretches are compositionally biased toward low complexity: residues 1–20 (MAET…AAKA) and 28–40 (AAGG…PAGP). Disordered regions lie at residues 1–42 (MAET…GPSV) and 89–219 (LVSK…AKKK). One can recognise an H15 domain in the interval 38 to 111 (AGPSVTELIT…GASGSFRLSK (74 aa)). Composition is skewed to basic residues over residues 121-135 (PKKK…KAAA), 143-160 (KKPK…KAKK), 168-183 (KSVK…KKAV), and 192-219 (KAVK…AKKK).

It belongs to the histone H1/H5 family.

The protein resides in the nucleus. It localises to the chromosome. Its function is as follows. Histones H1 are necessary for the condensation of nucleosome chains into higher-order structures. The sequence is that of Histone H1.11R from Gallus gallus (Chicken).